We begin with the raw amino-acid sequence, 72 residues long: Enterobactin biosynthesis protein YbdZ (72 aa).

This sequence belongs to the MbtH-like family.

Its function is as follows. Involved in the biosynthesis of the siderophore enterobactin (enterochelin), which is a macrocyclic trimeric lactone of N-(2,3-dihydroxybenzoyl)-serine. Plays a role in the catalytic function of EntF. It is required for adenylation of amino acids in non-ribosomal peptide biosynthesis. The protein is Enterobactin biosynthesis protein YbdZ of Escherichia coli (strain K12).